Here is a 213-residue protein sequence, read N- to C-terminus: Transcriptional regulatory protein YdfI (213 aa).

The Response regulatory domain maps to 3-118 (KVLIVDDHLV…TLFHTMDAAI (116 aa)). At Asp54 the chain carries 4-aspartylphosphate. One can recognise an HTH luxR-type domain in the interval 142-207 (KQRNETQLTE…EAVTIAMQKG (66 aa)). Residues 166 to 185 (SKAIAFDLGVSERTVKSRLT) constitute a DNA-binding region (H-T-H motif).

In terms of processing, phosphorylated by YdfH.

It is found in the cytoplasm. Functionally, member of the two-component regulatory system YdfH/YdfI. Regulates the transcription of ydfJ by binding to its promoter region. In Bacillus subtilis (strain 168), this protein is Transcriptional regulatory protein YdfI (ydfI).